A 463-amino-acid chain; its full sequence is Quinolone resistance protein NorB (463 aa).

The next 14 helical transmembrane spans lie at 17 to 37 (IGIV…VNVV), 53 to 73 (IAVS…GGLA), 86 to 106 (IILN…LLLI), 107 to 127 (IGRL…LSII), 142 to 162 (YWSI…GAVA), 165 to 185 (LGWR…LFLI), 201 to 221 (FDIK…ILIT), 230 to 250 (SLLF…FIVL), 273 to 293 (TASN…NTFV), 299 to 319 (YSSL…LIMI), 334 to 354 (PMLI…LTFL), 357 to 377 (IFYV…LGIY), 403 to 423 (MASA…YAIV), and 435 to 455 (IALW…LLLV).

It belongs to the major facilitator superfamily. TCR/Tet family.

It is found in the cell membrane. Multidrug efflux pump that acts independently of NorA and is one of the factors that confers resistance against diverse quinolones and chemical compounds. The polypeptide is Quinolone resistance protein NorB (norB) (Staphylococcus aureus (strain COL)).